The primary structure comprises 130 residues: Con-Ins G2b (130 aa).

Positions Met-1–Ser-23 are cleaved as a signal peptide. 4 cysteine pairs are disulfide-bonded: Cys-29–Cys-100, Cys-41–Cys-103, Cys-53–Cys-116, and Cys-102–Cys-107. Pro-34 carries the post-translational modification 4-hydroxyproline; partial. Residues Glu-54–Arg-77 are disordered. A propeptide spans Arg-59–Arg-92 (c peptide). Over residues Lys-68–Arg-77 the composition is skewed to basic residues. At Glu-111 the chain carries 4-carboxyglutamate; partial.

It belongs to the insulin family. Heterodimer of A and B chains; disulfide-linked. Expressed by the venom gland.

The protein localises to the secreted. Its function is as follows. This venom insulin, from a fish-hunting cone snail, facilitates prey capture by rapidly inducing hypoglycemic shock. Intraperitoneal injection of this peptide into zebrafish lowers blood glucose with the same potency than human insulin. In vivo, when applied to water, this peptide reduces overall locomotor activity of zebrafish larvae, observed as a significant decrease in the percentage of time spent swimming and movement frequency. In Conus geographus (Geography cone), this protein is Con-Ins G2b.